Here is a 1412-residue protein sequence, read N- to C-terminus: MPN domain-containing protein CG4751 (1412 aa).

The span at 1–10 (MENGVEHGVD) shows a compositional bias: basic and acidic residues. The interval 1–123 (MENGVEHGVD…TKENYEGFNG (123 aa)) is disordered. Composition is skewed to acidic residues over residues 23-35 (GEGDCDGDGEVEG) and 103-114 (SDAGDEDNDDET). The 107-residue stretch at 113–219 (ETKENYEGFN…AYKNTYLRKC (107 aa)) folds into the RAMA domain. In terms of domain architecture, MPN spans 284–420 (ITVNSSALLL…LESVVKCIWI (137 aa)). Zn(2+)-binding residues include His361, His363, and Asp374. Disordered stretches follow at residues 554-589 (INPPKEEQFSEAMGGLEDSGRKAEEESNAQAEQKAS), 669-734 (SALN…DIAR), 853-891 (GGSGNSNAHSSSKSKSERSSKSSSSSSSSNSSSTSNSYK), 1027-1066 (SIPPPPQTASSGSSNSSSSKKQQQLQQQQHQQQQQQQQQQ), 1271-1318 (MKPP…NSGG), 1330-1376 (SSVP…SGGV), and 1389-1412 (LAAPPPAKMPKNNMGDDILNLSHD). A coiled-coil region spans residues 572–600 (SGRKAEEESNAQAEQKASELKVMSLQEQL). Residues Ser699, Ser701, Ser705, Ser719, Ser723, and Ser728 each carry the phosphoserine modification. Over residues 702-720 (PAKSDTSSHASTSRTRNSP) the composition is skewed to polar residues. Low complexity-rich tracts occupy residues 873-891 (KSSSSSSSSNSSSTSNSYK) and 1036-1066 (SSGSSNSSSSKKQQQLQQQQHQQQQQQQQQQ). The span at 1275–1290 (KSTTPSSARTRESSAS) shows a compositional bias: polar residues. Ser1288 and Ser1290 each carry phosphoserine. Thr1297 is subject to Phosphothreonine. A compositionally biased stretch (low complexity) spans 1360–1370 (LYGELAPPGAL).

Belongs to the peptidase M67 family.

Its function is as follows. Probable protease. In Drosophila melanogaster (Fruit fly), this protein is MPN domain-containing protein CG4751.